A 93-amino-acid polypeptide reads, in one-letter code: Small ribosomal subunit protein uS19 (93 aa).

The protein belongs to the universal ribosomal protein uS19 family.

Protein S19 forms a complex with S13 that binds strongly to the 16S ribosomal RNA. The polypeptide is Small ribosomal subunit protein uS19 (Karelsulcia muelleri (strain GWSS) (Sulcia muelleri)).